The sequence spans 144 residues: Large ribosomal subunit protein uL13 (144 aa).

The protein belongs to the universal ribosomal protein uL13 family. In terms of assembly, part of the 50S ribosomal subunit.

This protein is one of the early assembly proteins of the 50S ribosomal subunit, although it is not seen to bind rRNA by itself. It is important during the early stages of 50S assembly. The polypeptide is Large ribosomal subunit protein uL13 (Lawsonia intracellularis (strain PHE/MN1-00)).